The primary structure comprises 97 residues: Small ribosomal subunit protein bS20 (97 aa).

Residues Met1–Lys22 form a disordered region.

It belongs to the bacterial ribosomal protein bS20 family.

Functionally, binds directly to 16S ribosomal RNA. The chain is Small ribosomal subunit protein bS20 from Crocosphaera subtropica (strain ATCC 51142 / BH68) (Cyanothece sp. (strain ATCC 51142)).